A 381-amino-acid chain; its full sequence is 1-deoxy-D-xylulose 5-phosphate reductoisomerase (381 aa).

Residues Thr-10, Gly-11, Ser-12, Ile-13, Gly-36, Lys-37, Asn-38, and Asn-122 each coordinate NADPH. Lys-123 contacts 1-deoxy-D-xylulose 5-phosphate. Residue Glu-124 participates in NADPH binding. Asp-148 provides a ligand contact to Mn(2+). 4 residues coordinate 1-deoxy-D-xylulose 5-phosphate: Ser-149, Glu-150, Ser-173, and His-196. Glu-150 contacts Mn(2+). Gly-202 contributes to the NADPH binding site. Positions 209, 214, 215, and 218 each coordinate 1-deoxy-D-xylulose 5-phosphate. Glu-218 contacts Mn(2+).

The protein belongs to the DXR family. Mg(2+) is required as a cofactor. The cofactor is Mn(2+).

It carries out the reaction 2-C-methyl-D-erythritol 4-phosphate + NADP(+) = 1-deoxy-D-xylulose 5-phosphate + NADPH + H(+). The protein operates within isoprenoid biosynthesis; isopentenyl diphosphate biosynthesis via DXP pathway; isopentenyl diphosphate from 1-deoxy-D-xylulose 5-phosphate: step 1/6. Catalyzes the NADPH-dependent rearrangement and reduction of 1-deoxy-D-xylulose-5-phosphate (DXP) to 2-C-methyl-D-erythritol 4-phosphate (MEP). The sequence is that of 1-deoxy-D-xylulose 5-phosphate reductoisomerase from Desulfitobacterium hafniense (strain DSM 10664 / DCB-2).